A 189-amino-acid chain; its full sequence is Chitin synthase 2 (189 aa).

It belongs to the chitin synthase family. Class II subfamily.

It is found in the cell membrane. The enzyme catalyses [(1-&gt;4)-N-acetyl-beta-D-glucosaminyl](n) + UDP-N-acetyl-alpha-D-glucosamine = [(1-&gt;4)-N-acetyl-beta-D-glucosaminyl](n+1) + UDP + H(+). In terms of biological role, polymerizes chitin, a structural polymer of the cell wall and septum, by transferring the sugar moiety of UDP-GlcNAc to the non-reducing end of the growing chitin polymer. This Ajellomyces dermatitidis (Blastomyces dermatitidis) protein is Chitin synthase 2 (CHS2).